The primary structure comprises 59 residues: Large ribosomal subunit protein bL32c (59 aa).

The tract at residues 37-59 (SRSFSRGNEHPKPKGFSGQQANK) is disordered.

Belongs to the bacterial ribosomal protein bL32 family.

The protein resides in the plastid. Its subcellular location is the chloroplast. The protein is Large ribosomal subunit protein bL32c (rpl32) of Zea mays (Maize).